A 288-amino-acid chain; its full sequence is 2-hydroxy-6-oxononadienedioate/2-hydroxy-6-oxononatrienedioate hydrolase (288 aa).

One can recognise an AB hydrolase-1 domain in the interval 38–274 (ALVLLHGSGP…RCGHWAQWEH (237 aa)). The Proton acceptor role is filled by His-268.

Belongs to the AB hydrolase superfamily. MhpC family. In terms of assembly, homodimer.

It catalyses the reaction (2Z,4E)-2-hydroxy-6-oxonona-2,4-dienedioate + H2O = (2Z)-2-hydroxypenta-2,4-dienoate + succinate + H(+). The enzyme catalyses (2Z,4E,7E)-2-hydroxy-6-oxonona-2,4,7-trienedioate + H2O = (2Z)-2-hydroxypenta-2,4-dienoate + fumarate + H(+). Its pathway is aromatic compound metabolism; 3-phenylpropanoate degradation. Functionally, catalyzes the cleavage of the C5-C6 bond of 2-hydroxy-6-oxononadienedioate and 2-hydroxy-6-oxononatrienedioate, a dienol ring fission product of the bacterial meta-cleavage pathway for degradation of phenylpropionic acid. This chain is 2-hydroxy-6-oxononadienedioate/2-hydroxy-6-oxononatrienedioate hydrolase, found in Burkholderia vietnamiensis (strain G4 / LMG 22486) (Burkholderia cepacia (strain R1808)).